The following is a 117-amino-acid chain: Crustacean hyperglycemic hormones 3 (117 aa).

The signal sequence occupies residues 1–24 (MVTPRMLSALSAVLLLVLTASSSA). Cystine bridges form between cysteine 50–cysteine 86, cysteine 66–cysteine 82, and cysteine 69–cysteine 95. Valine 115 carries the valine amide modification.

The protein belongs to the arthropod CHH/MIH/GIH/VIH hormone family. Produced by the medulla terminalis X-organ in the eyestalks and transported to the sinus gland where they are stored and released.

It localises to the secreted. Functionally, hormone found in the sinus gland of isopods and decapods which controls the blood sugar level. Has a secretagogue action over the amylase released from the midgut gland. May act as a stress hormone and may be involved in the control of molting and reproduction. The sequence is that of Crustacean hyperglycemic hormones 3 from Penaeus japonicus (Kuruma prawn).